The following is a 489-amino-acid chain: Glutamate--tRNA ligase (489 aa).

Residues 11–21 (PSPTGHLHIGG) carry the 'HIGH' region motif. Zn(2+)-binding residues include Cys-108, Cys-110, Cys-136, and His-138. Residues 253 to 257 (KLSKR) carry the 'KMSKS' region motif. Residue Lys-256 coordinates ATP.

Belongs to the class-I aminoacyl-tRNA synthetase family. Glutamate--tRNA ligase type 1 subfamily. In terms of assembly, monomer. Zn(2+) serves as cofactor.

It is found in the cytoplasm. It carries out the reaction tRNA(Glu) + L-glutamate + ATP = L-glutamyl-tRNA(Glu) + AMP + diphosphate. In terms of biological role, catalyzes the attachment of glutamate to tRNA(Glu) in a two-step reaction: glutamate is first activated by ATP to form Glu-AMP and then transferred to the acceptor end of tRNA(Glu). The polypeptide is Glutamate--tRNA ligase (Geobacillus thermodenitrificans (strain NG80-2)).